A 354-amino-acid polypeptide reads, in one-letter code: Uroporphyrinogen decarboxylase (354 aa).

Substrate contacts are provided by residues 30 to 34 (RQAGR), F49, D79, Y156, S211, and H326.

The protein belongs to the uroporphyrinogen decarboxylase family. As to quaternary structure, homodimer.

It localises to the cytoplasm. It carries out the reaction uroporphyrinogen III + 4 H(+) = coproporphyrinogen III + 4 CO2. It functions in the pathway porphyrin-containing compound metabolism; protoporphyrin-IX biosynthesis; coproporphyrinogen-III from 5-aminolevulinate: step 4/4. Catalyzes the decarboxylation of four acetate groups of uroporphyrinogen-III to yield coproporphyrinogen-III. This is Uroporphyrinogen decarboxylase from Salinibacter ruber (strain DSM 13855 / M31).